Consider the following 305-residue polypeptide: Tyrosine recombinase XerD (305 aa).

Residues 2 to 87 (SQGEAWADAF…AVRQFYRFVL (86 aa)) enclose the Core-binding (CB) domain. The Tyr recombinase domain maps to 108-295 (PLPKVLERDE…AGEHLAHIVQ (188 aa)). Catalysis depends on residues Arg-149, Lys-173, His-247, Arg-250, and His-273. The active-site O-(3'-phospho-DNA)-tyrosine intermediate is the Tyr-282.

This sequence belongs to the 'phage' integrase family. XerD subfamily. As to quaternary structure, forms a cyclic heterotetrameric complex composed of two molecules of XerC and two molecules of XerD.

It is found in the cytoplasm. Site-specific tyrosine recombinase, which acts by catalyzing the cutting and rejoining of the recombining DNA molecules. The XerC-XerD complex is essential to convert dimers of the bacterial chromosome into monomers to permit their segregation at cell division. It also contributes to the segregational stability of plasmids. The polypeptide is Tyrosine recombinase XerD (Caulobacter vibrioides (strain ATCC 19089 / CIP 103742 / CB 15) (Caulobacter crescentus)).